A 355-amino-acid polypeptide reads, in one-letter code: UDP-N-acetylglucosamine--N-acetylmuramyl-(pentapeptide) pyrophosphoryl-undecaprenol N-acetylglucosamine transferase (355 aa).

Residues 15-17, Asn-127, Arg-163, Ser-191, Ile-244, 263-268, and Gln-288 contribute to the UDP-N-acetyl-alpha-D-glucosamine site; these read TGG and ALTVSE.

The protein belongs to the glycosyltransferase 28 family. MurG subfamily.

Its subcellular location is the cell inner membrane. The enzyme catalyses di-trans,octa-cis-undecaprenyl diphospho-N-acetyl-alpha-D-muramoyl-L-alanyl-D-glutamyl-meso-2,6-diaminopimeloyl-D-alanyl-D-alanine + UDP-N-acetyl-alpha-D-glucosamine = di-trans,octa-cis-undecaprenyl diphospho-[N-acetyl-alpha-D-glucosaminyl-(1-&gt;4)]-N-acetyl-alpha-D-muramoyl-L-alanyl-D-glutamyl-meso-2,6-diaminopimeloyl-D-alanyl-D-alanine + UDP + H(+). Its pathway is cell wall biogenesis; peptidoglycan biosynthesis. Its function is as follows. Cell wall formation. Catalyzes the transfer of a GlcNAc subunit on undecaprenyl-pyrophosphoryl-MurNAc-pentapeptide (lipid intermediate I) to form undecaprenyl-pyrophosphoryl-MurNAc-(pentapeptide)GlcNAc (lipid intermediate II). This chain is UDP-N-acetylglucosamine--N-acetylmuramyl-(pentapeptide) pyrophosphoryl-undecaprenol N-acetylglucosamine transferase, found in Escherichia coli O45:K1 (strain S88 / ExPEC).